Consider the following 206-residue polypeptide: Cytochrome c biogenesis ATP-binding export protein CcmA (206 aa).

In terms of domain architecture, ABC transporter spans 3–206; sequence VSVDDLCVTR…LAGASDEAFL (204 aa). 35 to 42 serves as a coordination point for ATP; sequence GPNGSGKT.

This sequence belongs to the ABC transporter superfamily. CcmA exporter (TC 3.A.1.107) family. In terms of assembly, the complex is composed of two ATP-binding proteins (CcmA) and two transmembrane proteins (CcmB).

The protein resides in the cell inner membrane. It catalyses the reaction heme b(in) + ATP + H2O = heme b(out) + ADP + phosphate + H(+). Functionally, part of the ABC transporter complex CcmAB involved in the biogenesis of c-type cytochromes; once thought to export heme, this seems not to be the case, but its exact role is uncertain. Responsible for energy coupling to the transport system. This chain is Cytochrome c biogenesis ATP-binding export protein CcmA, found in Roseobacter denitrificans (strain ATCC 33942 / OCh 114) (Erythrobacter sp. (strain OCh 114)).